Consider the following 367-residue polypeptide: Germination protease (367 aa).

Residues 1 to 15 (MKEPLDLSKYSVRTD) constitute a propeptide that is removed on maturation.

This sequence belongs to the peptidase A25 family. Homotetramer. In terms of processing, autoproteolytically processed. The inactive tetrameric zymogen termed p46 autoprocesses to a smaller form termed p41, which is active only during spore germination.

It catalyses the reaction Endopeptidase action with P4 Glu or Asp, P1 preferably Glu &gt; Asp, P1' hydrophobic and P2' Ala.. Its function is as follows. Initiates the rapid degradation of small, acid-soluble proteins during spore germination. The protein is Germination protease of Bacillus cereus (strain ATCC 10987 / NRS 248).